A 147-amino-acid polypeptide reads, in one-letter code: Large ribosomal subunit protein bL9 (147 aa).

It belongs to the bacterial ribosomal protein bL9 family.

Functionally, binds to the 23S rRNA. The chain is Large ribosomal subunit protein bL9 from Helicobacter hepaticus (strain ATCC 51449 / 3B1).